The sequence spans 71 residues: Paralithocin 2 (71 aa).

Positions 1-23 (MGAAKVLLVVLAVMVAVPNLAEG) are cleaved as a signal peptide. 4 disulfide bridges follow: Cys-29–Cys-58, Cys-34–Cys-54, Cys-39–Cys-52, and Cys-44–Cys-55. Arg-70 carries the arginine amide; partial modification.

The protein belongs to the paralithocin family. Post-translationally, the amidated form is probably the active form.

Functionally, has antibacterial activity, mainly against marine Gram-positive bacteria like C.maltaromaticum (MIC=50 uM), C.mobile (MIC=50 uM), C.divergens (MIC=50 uM) and C.funditum (MIC=25 uM) but also against C.glutamicum (MIC=12.5 uM). Has very little or no activity against Gram-negative bacteria. This chain is Paralithocin 2, found in Paralithodes camtschaticus (Red king crab).